The chain runs to 373 residues: tRNA-specific 2-thiouridylase MnmA (373 aa).

ATP-binding positions include 12–19 (GMSGGVDS) and Met-38. Residues 98–100 (NPD) form an interaction with target base in tRNA region. Cys-103 serves as the catalytic Nucleophile. Cys-103 and Cys-200 form a disulfide bridge. Gly-127 is a binding site for ATP. The tract at residues 150–152 (KDQ) is interaction with tRNA. Catalysis depends on Cys-200, which acts as the Cysteine persulfide intermediate. The interaction with tRNA stretch occupies residues 312 to 313 (RY).

This sequence belongs to the MnmA/TRMU family.

It localises to the cytoplasm. The catalysed reaction is S-sulfanyl-L-cysteinyl-[protein] + uridine(34) in tRNA + AH2 + ATP = 2-thiouridine(34) in tRNA + L-cysteinyl-[protein] + A + AMP + diphosphate + H(+). Functionally, catalyzes the 2-thiolation of uridine at the wobble position (U34) of tRNA, leading to the formation of s(2)U34. This chain is tRNA-specific 2-thiouridylase MnmA, found in Streptococcus pneumoniae (strain Hungary19A-6).